The primary structure comprises 305 residues: tRNA dimethylallyltransferase (305 aa).

An ATP-binding site is contributed by 8-15 (GPTAVGKT). 10–15 (TAVGKT) serves as a coordination point for substrate. The interaction with substrate tRNA stretch occupies residues 33-36 (DSRQ).

The protein belongs to the IPP transferase family. As to quaternary structure, monomer. It depends on Mg(2+) as a cofactor.

The catalysed reaction is adenosine(37) in tRNA + dimethylallyl diphosphate = N(6)-dimethylallyladenosine(37) in tRNA + diphosphate. Functionally, catalyzes the transfer of a dimethylallyl group onto the adenine at position 37 in tRNAs that read codons beginning with uridine, leading to the formation of N6-(dimethylallyl)adenosine (i(6)A). The chain is tRNA dimethylallyltransferase from Thermotoga petrophila (strain ATCC BAA-488 / DSM 13995 / JCM 10881 / RKU-1).